The sequence spans 285 residues: Avenin-like b2 (285 aa).

A signal peptide spans Met1 to Ala18.

It belongs to the prolamin family. Contains disulfide bonds.

Seed storage protein. Might be integrated via inter-chain disulfide bonds within the glutenin polymer. The sequence is that of Avenin-like b2 from Triticum aestivum (Wheat).